Here is a 258-residue protein sequence, read N- to C-terminus: MNWTSLVYLWFIFKSIFADLTSHQLKSKVVFLDTTISDEVARSYLGSEDGNVTHGNYEILSIANGANDGNITSYLCQLPRTKKMAPTKPKPTMSVHELKSRAIDLISESFVEGTSCVFSFNLHANYWTIGYCHGINVIQFHENLDDFISGIHKPHSPNHVYTLGNFSKQTSPLEFEFDTKERTISQRLLGEVCDLTGEPRTIDTIYRCDHILEIVELTEIRTCQYELHINVPKLCSLPEFKRTNLEEGVSEILCTRIE.

The signal sequence occupies residues 1-18 (MNWTSLVYLWFIFKSIFA). 3 N-linked (GlcNAc...) asparagine glycosylation sites follow: N2, N51, and N70. Residues 114–237 (TSCVFSFNLH…HINVPKLCSL (124 aa)) form the MRH domain. C116 and C132 are disulfide-bonded. The a mannooligosaccharide derivative site is built by W127 and Q139. An N-linked (GlcNAc...) asparagine glycan is attached at N165. 2 disulfides stabilise this stretch: C193–C223 and C208–C235. A mannooligosaccharide derivative-binding residues include D194, R200, E219, and Y225.

Belongs to the OS-9 family. As to quaternary structure, interacts with missfolded ER lumenal proteins.

It localises to the endoplasmic reticulum membrane. Lectin involved in the quality control of the secretory pathway. As a member of the endoplasmic reticulum-associated degradation lumenal (ERAD-L) surveillance system, targets misfolded endoplasmic reticulum lumenal glycoproteins for degradation. This Candida albicans (strain SC5314 / ATCC MYA-2876) (Yeast) protein is Protein OS-9 homolog (YOS9).